The sequence spans 78 residues: Translation initiation factor IF-1, chloroplastic (78 aa).

The S1-like domain occupies 1–72 (MEKQKLIDME…TKGRITYRLR (72 aa)).

It belongs to the IF-1 family. As to quaternary structure, component of the 30S ribosomal translation pre-initiation complex which assembles on the 30S ribosome in the order IF-2 and IF-3, IF-1 and N-formylmethionyl-tRNA(fMet); mRNA recruitment can occur at any time during PIC assembly.

The protein resides in the plastid. Its subcellular location is the chloroplast. One of the essential components for the initiation of protein synthesis. Stabilizes the binding of IF-2 and IF-3 on the 30S subunit to which N-formylmethionyl-tRNA(fMet) subsequently binds. Helps modulate mRNA selection, yielding the 30S pre-initiation complex (PIC). Upon addition of the 50S ribosomal subunit IF-1, IF-2 and IF-3 are released leaving the mature 70S translation initiation complex. The polypeptide is Translation initiation factor IF-1, chloroplastic (Marchantia polymorpha (Common liverwort)).